A 414-amino-acid chain; its full sequence is Glucose-1-phosphate adenylyltransferase (414 aa).

Alpha-D-glucose 1-phosphate contacts are provided by residues Tyr-99, Gly-164, 181 to 182, and Ser-199; that span reads EK.

It belongs to the bacterial/plant glucose-1-phosphate adenylyltransferase family. In terms of assembly, homotetramer.

It catalyses the reaction alpha-D-glucose 1-phosphate + ATP + H(+) = ADP-alpha-D-glucose + diphosphate. It participates in glycan biosynthesis; glycogen biosynthesis. Involved in the biosynthesis of ADP-glucose, a building block required for the elongation reactions to produce glycogen. Catalyzes the reaction between ATP and alpha-D-glucose 1-phosphate (G1P) to produce pyrophosphate and ADP-Glc. In Bifidobacterium longum (strain DJO10A), this protein is Glucose-1-phosphate adenylyltransferase.